The primary structure comprises 227 residues: Isopentenyl-diphosphate Delta-isomerase 1 (227 aa).

Position 36 (lysine 36) interacts with substrate. Histidine 40 and histidine 51 together coordinate Mg(2+). Residues 49-199 (LLHRAFSVFL…EIKITPWFQI (151 aa)) form the Nudix hydrolase domain. Substrate-binding residues include arginine 70 and lysine 74. Cysteine 86 is an active-site residue. Substrate is bound at residue serine 87. Mg(2+) contacts are provided by glutamate 146 and glutamate 148. Glutamate 148 is a catalytic residue. Residue lysine 176 is modified to N6-acetyllysine. Positions 225–227 (HRM) match the Microbody targeting signal motif.

Belongs to the IPP isomerase type 1 family. As to quaternary structure, monomer. The cofactor is Mg(2+).

It is found in the peroxisome. It catalyses the reaction isopentenyl diphosphate = dimethylallyl diphosphate. The protein operates within isoprenoid biosynthesis; dimethylallyl diphosphate biosynthesis; dimethylallyl diphosphate from isopentenyl diphosphate: step 1/1. Catalyzes the 1,3-allylic rearrangement of the homoallylic substrate isopentenyl (IPP) to its highly electrophilic allylic isomer, dimethylallyl diphosphate (DMAPP). This Macaca fascicularis (Crab-eating macaque) protein is Isopentenyl-diphosphate Delta-isomerase 1 (IDI1).